A 554-amino-acid chain; its full sequence is 2-succinyl-5-enolpyruvyl-6-hydroxy-3-cyclohexene-1-carboxylate synthase (554 aa).

The protein belongs to the TPP enzyme family. MenD subfamily. As to quaternary structure, homodimer. Mg(2+) serves as cofactor. Mn(2+) is required as a cofactor. The cofactor is thiamine diphosphate.

It carries out the reaction isochorismate + 2-oxoglutarate + H(+) = 5-enolpyruvoyl-6-hydroxy-2-succinyl-cyclohex-3-ene-1-carboxylate + CO2. The protein operates within quinol/quinone metabolism; 1,4-dihydroxy-2-naphthoate biosynthesis; 1,4-dihydroxy-2-naphthoate from chorismate: step 2/7. Its pathway is quinol/quinone metabolism; menaquinone biosynthesis. Its function is as follows. Catalyzes the thiamine diphosphate-dependent decarboxylation of 2-oxoglutarate and the subsequent addition of the resulting succinic semialdehyde-thiamine pyrophosphate anion to isochorismate to yield 2-succinyl-5-enolpyruvyl-6-hydroxy-3-cyclohexene-1-carboxylate (SEPHCHC). In Renibacterium salmoninarum (strain ATCC 33209 / DSM 20767 / JCM 11484 / NBRC 15589 / NCIMB 2235), this protein is 2-succinyl-5-enolpyruvyl-6-hydroxy-3-cyclohexene-1-carboxylate synthase.